We begin with the raw amino-acid sequence, 364 residues long: Peptidyl-prolyl cis-trans isomerase D (364 aa).

Residues 7-170 form the PPIase cyclophilin-type domain; the sequence is YFDITIGNKP…EDAVIAKCGE (164 aa). 3 TPR repeats span residues 208-241, 261-294, and 301-334; these read ATHL…LNEK, IPCY…DSKY, and TKAY…DPED.

This sequence belongs to the cyclophilin-type PPIase family. PPIase D subfamily.

It localises to the cytoplasm. It carries out the reaction [protein]-peptidylproline (omega=180) = [protein]-peptidylproline (omega=0). In terms of biological role, PPIases accelerate the folding of proteins. It catalyzes the cis-trans isomerization of proline imidic peptide bonds in oligopeptides. This Rhizopus delemar (strain RA 99-880 / ATCC MYA-4621 / FGSC 9543 / NRRL 43880) (Mucormycosis agent) protein is Peptidyl-prolyl cis-trans isomerase D (cyp12).